The following is a 629-amino-acid chain: tRNA uridine 5-carboxymethylaminomethyl modification enzyme MnmG (629 aa).

Residues Gly13 to Gly18, Val125, and Ser180 each bind FAD. Gly273–Phe287 lines the NAD(+) pocket. An FAD-binding site is contributed by Gln370.

This sequence belongs to the MnmG family. As to quaternary structure, homodimer. Heterotetramer of two MnmE and two MnmG subunits. Requires FAD as cofactor.

It localises to the cytoplasm. Its function is as follows. NAD-binding protein involved in the addition of a carboxymethylaminomethyl (cmnm) group at the wobble position (U34) of certain tRNAs, forming tRNA-cmnm(5)s(2)U34. The polypeptide is tRNA uridine 5-carboxymethylaminomethyl modification enzyme MnmG (Salmonella arizonae (strain ATCC BAA-731 / CDC346-86 / RSK2980)).